A 112-amino-acid chain; its full sequence is Type III inner-rod protein PscI (112 aa).

The protein belongs to the YscI/HrpB family. As to quaternary structure, homomultimer (through its C-terminal region).

Its function is as follows. Component of the type III secretion (T3S) injectisome that translocates effector toxins into host cells, facilitating the establishment and dissemination of infection. Polymerizes into flexible and regularly twisted fibrils and plays an essential role in needle assembly. The chain is Type III inner-rod protein PscI (pscI) from Pseudomonas aeruginosa (strain ATCC 15692 / DSM 22644 / CIP 104116 / JCM 14847 / LMG 12228 / 1C / PRS 101 / PAO1).